The following is a 282-amino-acid chain: Probable endonuclease 4 (282 aa).

Zn(2+) is bound by residues H66, H106, E143, D177, H180, H214, D227, H229, and E259.

The protein belongs to the AP endonuclease 2 family. It depends on Zn(2+) as a cofactor.

It catalyses the reaction Endonucleolytic cleavage to 5'-phosphooligonucleotide end-products.. Endonuclease IV plays a role in DNA repair. It cleaves phosphodiester bonds at apurinic or apyrimidinic (AP) sites, generating a 3'-hydroxyl group and a 5'-terminal sugar phosphate. The sequence is that of Probable endonuclease 4 from Nitratidesulfovibrio vulgaris (strain ATCC 29579 / DSM 644 / CCUG 34227 / NCIMB 8303 / VKM B-1760 / Hildenborough) (Desulfovibrio vulgaris).